The following is a 156-amino-acid chain: MLSAVRRAIPLSARILRTSLIQRCAGATSAAVTGAAPPQFDPIAAEKGFKPLHSHGTLFKIERYFAAAMVPLIPAAYFIHGREMDLCLALALTLHVHWGVWGVVNDYGRPFVLGDTLAAAVRVGAYIFTACLLAGLLYFNEHDVGLTRAFEMVWEL.

A mitochondrion-targeting transit peptide spans 1-25; it reads MLSAVRRAIPLSARILRTSLIQRCA. Over 26-59 the chain is Mitochondrial matrix; it reads GATSAAVTGAAPPQFDPIAAEKGFKPLHSHGTLF. A helical membrane pass occupies residues 60-78; the sequence is KIERYFAAAMVPLIPAAYF. At 79-83 the chain is on the mitochondrial intermembrane side; sequence IHGRE. The helical transmembrane segment at 84–104 threads the bilayer; sequence MDLCLALALTLHVHWGVWGVV. Residue H95 participates in heme b binding. Over 105–119 the chain is Mitochondrial matrix; sequence NDYGRPFVLGDTLAA. Residue Y107 coordinates a rhodoquinol. Residues 120–141 traverse the membrane as a helical segment; sequence AVRVGAYIFTACLLAGLLYFNE. Over 142-156 the chain is Mitochondrial intermembrane; that stretch reads HDVGLTRAFEMVWEL.

The protein belongs to the CybS family. In terms of assembly, component of the mitochondrial electron transport chain complex II composed of four subunits: a flavoprotein (Fp), an iron-sulfur protein (Ip), and a large cytochrome b (CybL) subunit and a small cytochrome b (CybS) subunit. There are 2 developmental stage-specific forms of complex II which have the Ip and CybL subunits in common. Complex II from the free-living larvae (aerobic environment) acts as a succinate dehydrogenase and is composed of the common subunit Ip and CybL and the stage specific subunits FpL and CybSL. Complex II from parasitic larvae and adults (anaerobic environment) acts as a fumarate reductase and is composed of the common subunit Ip and CybL and the stage specific subunits FpA and CybSA. The cofactor is heme b. In terms of tissue distribution, expressed in adult muscles (at protein level).

The protein localises to the mitochondrion inner membrane. In terms of biological role, membrane-bound small subunit (CybS) of the mitochondrial electron transport chain complex II, which together with the membrane-bound large subunit (CybL), anchor the catalytic subunits to the inner mitochondria membrane. During the parasitic larvae and adult stages, which occur in an anaerobic environment, complex II acts as a fumarate reductase by transferring electrons from rhodoquinol to fumarate. The polypeptide is Succinate dehydrogenase [ubiquinone] cytochrome b small subunit 1, mitochondrial (Ascaris suum (Pig roundworm)).